Consider the following 1308-residue polypeptide: MKPATGLWVWVSLLVAAGTVQPSDSQSVCAGTENKLSSLSDLEQQYRALRKYYENCEVVMGNLEITSIEHNRDLSFLRSVREVTGYVLVALNQFRYLPLENLRIIRGTKLYEDRYALAIFLNYRKDGNFGLQELGLKNLTEILNGGVYVDQNKFLCYADTIHWQDIVRNPWPSNLTLVSTNGSSGCGRCHKSCTGRCWGPTENHCQTLTRTVCAEQCDGRCYGPYVSDCCHRECAGGCSGPKDTDCFACMNFNDSGACVTQCPQTFVYNPTTFQLEHNFNAKYTYGAFCVKKCPHNFVVDSSSCVRACPSSKMEVEENGIKMCKPCTDICPKACDGIGTGSLMSAQTVDSSNIDKFINCTKINGNLIFLVTGIHGDPYNAIEAIDPEKLNVFRTVREITGFLNIQSWPPNMTDFSVFSNLVTIGGRVLYSGLSLLILKQQGITSLQFQSLKEISAGNIYITDNSNLCYYHTINWTTLFSTINQRIVIRDNRKAENCTAEGMVCNHLCSSDGCWGPGPDQCLSCRRFSRGRICIESCNLYDGEFREFENGSICVECDPQCEKMEDGLLTCHGPGPDNCTKCSHFKDGPNCVEKCPDGLQGANSFIFKYADPDRECHPCHPNCTQGCNGPTSHDCIYYPWTGHSTLPQHARTPLIAAGVIGGLFILVIVGLTFAVYVRRKSIKKKRALRRFLETELVEPLTPSGTAPNQAQLRILKETELKRVKVLGSGAFGTVYKGIWVPEGETVKIPVAIKILNETTGPKANVEFMDEALIMASMDHPHLVRLLGVCLSPTIQLVTQLMPHGCLLEYVHEHKDNIGSQLLLNWCVQIAKGMMYLEERRLVHRDLAARNVLVKSPNHVKITDFGLARLLEGDEKEYNADGGKMPIKWMALECIHYRKFTHQSDVWSYGVTIWELMTFGGKPYDGIPTREIPDLLEKGERLPQPPICTIDVYMVMVKCWMIDADSRPKFKELAAEFSRMARDPQRYLVIQGDDRMKLPSPNDSKFFQNLLDEEDLEDMMDAEEYLVPQAFNIPPPIYTSRARIDSNRSEIGHSPPPAYTPMSGNQFVYRDGGFAAEQGVSVPYRAPTSTIPEAPVAQGATAEIFDDSCCNGTLRKPVAPHVQEDSSTQRYSADPTVFAPERSPRGELDEEGYMTPMRDKPKQEYLNPVEENPFVSRRKNGDLQALDNPEYHNASNGPPKAEDEYVNEPLYLNTFANTLGKAEYLKNNILSMPEKAKKAFDNPDYWNHSLPPRSTLQHPDYLQEYSTKYFYKQNGRIRPIVAENPEYLSEFSLKPGTVLPPPPYRHRNTVV.

The N-terminal stretch at 1 to 25 (MKPATGLWVWVSLLVAAGTVQPSDS) is a signal peptide. The Extracellular portion of the chain corresponds to 26 to 651 (QSVCAGTENK…STLPQHARTP (626 aa)). A disulfide bridge connects residues Cys29 and Cys56. N-linked (GlcNAc...) asparagine glycans are attached at residues Asn138, Asn174, and Asn181. Cystine bridges form between Cys156/Cys186, Cys189/Cys197, Cys193/Cys205, Cys213/Cys221, Cys217/Cys229, Cys230/Cys238, Cys234/Cys246, Cys249/Cys258, Cys262/Cys289, Cys293/Cys304, Cys308/Cys323, and Cys326/Cys330. Asn253 carries N-linked (GlcNAc...) asparagine glycosylation. 4 N-linked (GlcNAc...) asparagine glycosylation sites follow: Asn358, Asn410, Asn473, and Asn495. Cystine bridges form between Cys503–Cys512, Cys507–Cys520, Cys523–Cys532, Cys536–Cys552, Cys555–Cys569, Cys559–Cys577, Cys580–Cys589, Cys593–Cys614, Cys617–Cys625, and Cys621–Cys633. Asn548 carries N-linked (GlcNAc...) asparagine glycosylation. Asn576 carries an N-linked (GlcNAc...) asparagine glycan. Asn620 is a glycosylation site (N-linked (GlcNAc...) asparagine). The chain crosses the membrane as a helical span at residues 652-675 (LIAAGVIGGLFILVIVGLTFAVYV). The short motif at 676–684 (RRKSIKKKR) is the Nuclear localization signal element. Topologically, residues 676-1308 (RRKSIKKKRA…PPYRHRNTVV (633 aa)) are cytoplasmic. The Protein kinase domain maps to 718 to 985 (LKRVKVLGSG…RMARDPQRYL (268 aa)). Residues 724–732 (LGSGAFGTV), Lys751, 797–799 (QLM), and 843–848 (DLAARN) contribute to the ATP site. Catalysis depends on Asp843, which acts as the Proton acceptor. Tyr875, Tyr1035, Tyr1056, Tyr1150, Tyr1162, Tyr1188, Tyr1202, Tyr1242, Tyr1258, and Tyr1284 each carry phosphotyrosine; by autocatalysis. 2 consecutive short sequence motifs (PPxY motif) follow at residues 1032–1035 (PPIY) and 1053–1056 (PPAY). Residues 1117–1150 (PHVQEDSSTQRYSADPTVFAPERSPRGELDEEGY) form a disordered region. Positions 1298 to 1301 (PPPY) match the PPxY motif 3 motif. A PDZ-binding motif is present at residues 1306–1308 (TVV).

Belongs to the protein kinase superfamily. Tyr protein kinase family. EGF receptor subfamily. Monomer in the absence of bound ligand. Homodimer or heterodimer with another ERBB family member upon ligand binding, thus forming heterotetramers. Interacts with EGFR and ERBB2. Interacts with CBFA2T3. Interacts with DLG2 (via its PDZ domain), DLG3 (via its PDZ domain), DLG4 (via its PDZ domain) and SNTB2 (via its PDZ domain). Interacts with MUC1. Interacts (via its PPxy motifs) with WWOX. Interacts (via the PPxY motif 3 of isoform JM-A CYT-2) with YAP1 (via the WW domain 1 of isoform 1). Interacts (isoform JM-A CYT-1 and isoform JM-B CYT-1) with WWP1. Interacts (via its intracellular domain) with TRIM28. Interacts (via the intracellular domains of both CYT-1 and CYT-2 isoforms) with KAP1; the interaction does not phosphorylate KAP1 but represses ERBB4-mediated transcriptional activity. Interacts with PRPU, DDX23, MATR3, RBM15, ILF3, KAP1, U5S1, U2SURP, ITCH, HNRNPU, AP2A1, NULC, LEO1, WWP2, IGHG1, HXK1, GRB7 and SRRT. Interacts (phosphorylated isoform JM-A CYT-1 and isoform JM-B CYT-1) with PIK3R1. Interacts with SHC1. Interacts with GRB2. Interacts (soluble intracellular domain) with STAT5A. Interacts (soluble intracellular domain) with BCL2. Interacts (phosphorylated) with STAT1. In terms of processing, isoform JM-A CYT-1 and isoform JM-A CYT-2 are processed by ADAM17. Proteolytic processing in response to ligand or 12-O-tetradecanoylphorbol-13-acetate stimulation results in the production of 120 kDa soluble receptor forms and intermediate membrane-anchored 80 kDa fragments (m80HER4), which are further processed by a presenilin-dependent gamma-secretase to release a cytoplasmic intracellular domain (E4ICD; E4ICD1/s80Cyt1 or E4ICD2/s80Cyt2, depending on the isoform). Membrane-anchored 80 kDa fragments of the processed isoform JM-A CYT-1 are more readily degraded by the proteasome than fragments of isoform JM-A CYT-2, suggesting a prevalence of E4ICD2 over E4ICD1. Isoform JM-B CYT-1 and isoform JM-B CYT-2 lack the ADAM17 cleavage site and are not processed by ADAM17, precluding further processing by gamma-secretase. Autophosphorylated on tyrosine residues in response to ligand binding. Autophosphorylation occurs in trans, i.e. one subunit of the dimeric receptor phosphorylates tyrosine residues on the other subunit. Ligands trigger phosphorylation at specific tyrosine residues, thereby creating binding sites for scaffold proteins and effectors. Constitutively phosphorylated at a basal level when overexpressed in heterologous systems; ligand binding leads to increased phosphorylation. Phosphorylation at Tyr-1035 is important for interaction with STAT1. Phosphorylation at Tyr-1056 is important for interaction with PIK3R1. Phosphorylation at Tyr-1242 is important for interaction with SHC1. Phosphorylation at Tyr-1188 may also contribute to the interaction with SHC1. Isoform JM-A CYT-2 is constitutively phosphorylated on tyrosine residues in a ligand-independent manner. E4ICD2 but not E4ICD1 is phosphorylated on tyrosine residues. Post-translationally, ubiquitinated. During mitosis, the ERBB4 intracellular domain is ubiquitinated by the APC/C complex and targeted to proteasomal degradation. Isoform JM-A CYT-1 and isoform JM-B CYT-1 are ubiquitinated by WWP1. The ERBB4 intracellular domain (E4ICD1) is ubiquitinated, and this involves NEDD4. Expressed at highest levels in brain, heart, kidney, in addition to skeletal muscle, parathyroid, cerebellum, pituitary, spleen, testis and breast. Lower levels in thymus, lung, salivary gland, and pancreas. Isoform JM-A CYT-1 and isoform JM-B CYT-1 are expressed in cerebellum, but only the isoform JM-B is expressed in the heart.

The protein resides in the cell membrane. It localises to the nucleus. The protein localises to the mitochondrion. The catalysed reaction is L-tyrosyl-[protein] + ATP = O-phospho-L-tyrosyl-[protein] + ADP + H(+). Its activity is regulated as follows. Binding of a cognate ligand leads to dimerization and activation by autophosphorylation on tyrosine residues. In vitro kinase activity is increased by Mg(2+). Inhibited by PD153035, lapatinib, gefitinib (iressa, ZD1839), AG1478 and BIBX1382BS. Its function is as follows. Tyrosine-protein kinase that plays an essential role as cell surface receptor for neuregulins and EGF family members and regulates development of the heart, the central nervous system and the mammary gland, gene transcription, cell proliferation, differentiation, migration and apoptosis. Required for normal cardiac muscle differentiation during embryonic development, and for postnatal cardiomyocyte proliferation. Required for normal development of the embryonic central nervous system, especially for normal neural crest cell migration and normal axon guidance. Required for mammary gland differentiation, induction of milk proteins and lactation. Acts as cell-surface receptor for the neuregulins NRG1, NRG2, NRG3 and NRG4 and the EGF family members BTC, EREG and HBEGF. Ligand binding triggers receptor dimerization and autophosphorylation at specific tyrosine residues that then serve as binding sites for scaffold proteins and effectors. Ligand specificity and signaling is modulated by alternative splicing, proteolytic processing, and by the formation of heterodimers with other ERBB family members, thereby creating multiple combinations of intracellular phosphotyrosines that trigger ligand- and context-specific cellular responses. Mediates phosphorylation of SHC1 and activation of the MAP kinases MAPK1/ERK2 and MAPK3/ERK1. Isoform JM-A CYT-1 and isoform JM-B CYT-1 phosphorylate PIK3R1, leading to the activation of phosphatidylinositol 3-kinase and AKT1 and protect cells against apoptosis. Isoform JM-A CYT-1 and isoform JM-B CYT-1 mediate reorganization of the actin cytoskeleton and promote cell migration in response to NRG1. Isoform JM-A CYT-2 and isoform JM-B CYT-2 lack the phosphotyrosine that mediates interaction with PIK3R1, and hence do not phosphorylate PIK3R1, do not protect cells against apoptosis, and do not promote reorganization of the actin cytoskeleton and cell migration. Proteolytic processing of isoform JM-A CYT-1 and isoform JM-A CYT-2 gives rise to the corresponding soluble intracellular domains (4ICD) that translocate to the nucleus, promote nuclear import of STAT5A, activation of STAT5A, mammary epithelium differentiation, cell proliferation and activation of gene expression. The ERBB4 soluble intracellular domains (4ICD) colocalize with STAT5A at the CSN2 promoter to regulate transcription of milk proteins during lactation. The ERBB4 soluble intracellular domains can also translocate to mitochondria and promote apoptosis. The polypeptide is Receptor tyrosine-protein kinase erbB-4 (ERBB4) (Homo sapiens (Human)).